A 345-amino-acid chain; its full sequence is Fructose-1,6-bisphosphatase class 1 2 (345 aa).

Positions 90, 109, 111, and 112 each coordinate Mg(2+). Substrate contacts are provided by residues 112 to 115 (DGSS) and Asn-200. Glu-272 contributes to the Mg(2+) binding site.

This sequence belongs to the FBPase class 1 family. Homotetramer. Requires Mg(2+) as cofactor.

The protein resides in the cytoplasm. It catalyses the reaction beta-D-fructose 1,6-bisphosphate + H2O = beta-D-fructose 6-phosphate + phosphate. It participates in carbohydrate biosynthesis; gluconeogenesis. The protein is Fructose-1,6-bisphosphatase class 1 2 of Nitrobacter hamburgensis (strain DSM 10229 / NCIMB 13809 / X14).